Consider the following 553-residue polypeptide: Formate--tetrahydrofolate ligase (553 aa).

Threonine 64–threonine 71 is a binding site for ATP.

It belongs to the formate--tetrahydrofolate ligase family.

It catalyses the reaction (6S)-5,6,7,8-tetrahydrofolate + formate + ATP = (6R)-10-formyltetrahydrofolate + ADP + phosphate. The protein operates within one-carbon metabolism; tetrahydrofolate interconversion. This chain is Formate--tetrahydrofolate ligase, found in Pseudothermotoga lettingae (strain ATCC BAA-301 / DSM 14385 / NBRC 107922 / TMO) (Thermotoga lettingae).